The sequence spans 208 residues: Uridine kinase (208 aa).

11–18 (GGSGSGKT) contributes to the ATP binding site.

This sequence belongs to the uridine kinase family.

The protein localises to the cytoplasm. It carries out the reaction uridine + ATP = UMP + ADP + H(+). It catalyses the reaction cytidine + ATP = CMP + ADP + H(+). It participates in pyrimidine metabolism; CTP biosynthesis via salvage pathway; CTP from cytidine: step 1/3. The protein operates within pyrimidine metabolism; UMP biosynthesis via salvage pathway; UMP from uridine: step 1/1. This chain is Uridine kinase, found in Staphylococcus carnosus (strain TM300).